The primary structure comprises 933 residues: Envelope glycoprotein B (933 aa).

The N-terminal stretch at 1–36 (MPRPRPRALRGSSPGWALVAAVAVGAALLMATLAVA) is a signal peptide. Residues 36–49 (AAPPGPRGPAARSP) show a composition bias toward low complexity. Residues 36–115 (AAPPGPRGPA…GNGTRSAARR (80 aa)) are disordered. Topologically, residues 37 to 797 (APPGPRGPAA…SGVSSFLSNP (761 aa)) are virion surface. Positions 54–69 (ASVEPVEDGDYDEYDD) are enriched in acidic residues. N-linked (GlcNAc...) asparagine; by host glycosylation is found at asparagine 107 and asparagine 161. 5 disulfides stabilise this stretch: cysteine 136–cysteine 596, cysteine 153–cysteine 552, cysteine 227–cysteine 291, cysteine 384–cysteine 432, and cysteine 619–cysteine 656. Involved in fusion and/or binding to host membrane stretches follow at residues 193-199 (TWQGSRY) and 278-285 (AHAGFYKT). N-linked (GlcNAc...) asparagine; by host glycosylation is found at asparagine 418 and asparagine 450. Residues asparagine 697 and asparagine 747 are each glycosylated (N-linked (GlcNAc...) asparagine; by host). 2 hydrophobic membrane proximal region regions span residues 742 to 795 (IDRI…SFLS) and 754 to 795 (LMAG…SFLS). The chain crosses the membrane as a helical span at residues 798–818 (FGALAVGLLVLAGLVAAFFAM). At 819–933 (RYIMRLRANP…SKDDEDGADP (115 aa)) the chain is on the intravirion side. Positions 881-884 (YMTL) match the Golgi targeting motif. Positions 920 to 923 (YQPL) match the Internalization motif motif.

It belongs to the herpesviridae glycoprotein B family. In terms of assembly, homotrimer; disulfide-linked. Binds to heparan sulfate proteoglycans. Interacts with gH/gL heterodimer.

The protein localises to the virion membrane. It is found in the host cell membrane. Its subcellular location is the host endosome membrane. It localises to the host Golgi apparatus membrane. Envelope glycoprotein that forms spikes at the surface of virion envelope. Essential for the initial attachment to heparan sulfate moieties of the host cell surface proteoglycans. Involved in fusion of viral and cellular membranes leading to virus entry into the host cell. Following initial binding to its host receptors, membrane fusion is mediated by the fusion machinery composed at least of gB and the heterodimer gH/gL. May be involved in the fusion between the virion envelope and the outer nuclear membrane during virion egress. This Herpesvirus ateles type 1 (strain Lennette) protein is Envelope glycoprotein B.